Consider the following 376-residue polypeptide: TelA-like protein SERP0976 (376 aa).

The protein belongs to the TelA family.

The chain is TelA-like protein SERP0976 from Staphylococcus epidermidis (strain ATCC 35984 / DSM 28319 / BCRC 17069 / CCUG 31568 / BM 3577 / RP62A).